The following is a 350-amino-acid chain: GTPase Obg (350 aa).

Residues 1 to 158 (MFIDSVKITL…RLVRLELKLI (158 aa)) enclose the Obg domain. Positions 159-339 (ADVGLVGFPN…LKFMLLEEIK (181 aa)) constitute an OBG-type G domain. Residues 165-172 (GFPNVGKS), 190-194 (FTTLT), 212-215 (DIPG), 280-283 (SKSD), and 320-322 (SSL) each bind GTP. Residues serine 172 and threonine 192 each contribute to the Mg(2+) site.

This sequence belongs to the TRAFAC class OBG-HflX-like GTPase superfamily. OBG GTPase family. As to quaternary structure, monomer. Mg(2+) serves as cofactor.

It is found in the cytoplasm. In terms of biological role, an essential GTPase which binds GTP, GDP and possibly (p)ppGpp with moderate affinity, with high nucleotide exchange rates and a fairly low GTP hydrolysis rate. Plays a role in control of the cell cycle, stress response, ribosome biogenesis and in those bacteria that undergo differentiation, in morphogenesis control. This chain is GTPase Obg, found in Campylobacter jejuni subsp. jejuni serotype O:2 (strain ATCC 700819 / NCTC 11168).